A 390-amino-acid chain; its full sequence is Probable NADH-dependent butanol dehydrogenase 2 (390 aa).

It belongs to the iron-containing alcohol dehydrogenase family.

The protein operates within alcohol metabolism; butanol biosynthesis. This chain is Probable NADH-dependent butanol dehydrogenase 2 (yugK), found in Bacillus subtilis (strain 168).